The primary structure comprises 408 residues: Serine/threonine transporter SstT (408 aa).

9 helical membrane passes run leucine 11–alanine 31, phenylalanine 43–leucine 63, isoleucine 82–methionine 102, alanine 141–leucine 161, isoleucine 192–glycine 212, leucine 216–valine 236, isoleucine 290–leucine 310, leucine 316–alanine 336, and valine 363–threonine 383.

The protein belongs to the dicarboxylate/amino acid:cation symporter (DAACS) (TC 2.A.23) family.

The protein resides in the cell inner membrane. It catalyses the reaction L-serine(in) + Na(+)(in) = L-serine(out) + Na(+)(out). It carries out the reaction L-threonine(in) + Na(+)(in) = L-threonine(out) + Na(+)(out). Involved in the import of serine and threonine into the cell, with the concomitant import of sodium (symport system). This Shewanella oneidensis (strain ATCC 700550 / JCM 31522 / CIP 106686 / LMG 19005 / NCIMB 14063 / MR-1) protein is Serine/threonine transporter SstT.